Consider the following 177-residue polypeptide: UBA-like domain-containing protein 1 (177 aa).

The disordered stretch occupies residues 89–177 (ESFHSGGSGS…RAHPAMEAER (89 aa)). Over residues 112–138 (PHAATSSSAASSWPTAASPPGGPQHHQ) the composition is skewed to low complexity. The span at 139 to 151 (PQPPLWTPTPPSP) shows a compositional bias: pro residues. A compositionally biased stretch (basic and acidic residues) spans 167-177 (PRAHPAMEAER).

The protein belongs to the UBALD family.

This chain is UBA-like domain-containing protein 1 (UBALD1), found in Homo sapiens (Human).